A 1357-amino-acid chain; its full sequence is DNA-directed RNA polymerase subunit beta (1357 aa).

This sequence belongs to the RNA polymerase beta chain family. As to quaternary structure, the RNAP catalytic core consists of 2 alpha, 1 beta, 1 beta' and 1 omega subunit. When a sigma factor is associated with the core the holoenzyme is formed, which can initiate transcription.

It carries out the reaction RNA(n) + a ribonucleoside 5'-triphosphate = RNA(n+1) + diphosphate. DNA-dependent RNA polymerase catalyzes the transcription of DNA into RNA using the four ribonucleoside triphosphates as substrates. In Pseudomonas putida (strain ATCC 700007 / DSM 6899 / JCM 31910 / BCRC 17059 / LMG 24140 / F1), this protein is DNA-directed RNA polymerase subunit beta.